A 155-amino-acid chain; its full sequence is Basic phospholipase A2 PC9 (155 aa).

A signal peptide spans 1–21; that stretch reads MYPAHLLVLLAVCVSLLGASA. Residues 22-27 constitute a propeptide that is removed on maturation; the sequence is ISPRPL. 7 cysteine pairs are disulfide-bonded: C38-C98, C54-C144, C56-C72, C71-C125, C78-C118, C87-C111, and C105-C116. 3 residues coordinate Ca(2+): Y55, G57, and G59. Residue H75 is part of the active site. A Ca(2+)-binding site is contributed by D76. D119 is an active-site residue.

It belongs to the phospholipase A2 family. Group I subfamily. D49 sub-subfamily. Ca(2+) serves as cofactor. Expressed by the venom gland.

It is found in the secreted. The catalysed reaction is a 1,2-diacyl-sn-glycero-3-phosphocholine + H2O = a 1-acyl-sn-glycero-3-phosphocholine + a fatty acid + H(+). Functionally, snake venom phospholipase A2 (PLA2) that inhibits neuromuscular transmission by blocking acetylcholine release from the nerve termini. PLA2 catalyzes the calcium-dependent hydrolysis of the 2-acyl groups in 3-sn-phosphoglycerides. In Laticauda colubrina (Yellow-lipped sea krait), this protein is Basic phospholipase A2 PC9.